The primary structure comprises 222 residues: Pyrrolidone-carboxylate peptidase (222 aa).

Active-site residues include Glu-80, Cys-146, and His-170.

This sequence belongs to the peptidase C15 family. As to quaternary structure, homotetramer.

The protein resides in the cytoplasm. It catalyses the reaction Release of an N-terminal pyroglutamyl group from a polypeptide, the second amino acid generally not being Pro.. Functionally, removes 5-oxoproline from various penultimate amino acid residues except L-proline. This chain is Pyrrolidone-carboxylate peptidase, found in Mycobacterium marinum (strain ATCC BAA-535 / M).